The sequence spans 834 residues: 5-hydroxytryptamine receptor 2A (834 aa).

Topologically, residues 1 to 230 are extracellular; the sequence is MAHETSFNDA…TQLLRMAVTS (230 aa). The disordered stretch occupies residues 56–75; the sequence is TDDGQLEDTNNNNNSKRYYS. Residues Asn68, Asn97, Asn161, Asn175, Asn183, Asn194, Asn203, and Asn209 are each glycosylated (N-linked (GlcNAc...) asparagine). A helical transmembrane segment spans residues 231-253; sequence VLLGLMILVTIIGNVFVIAAIIL. At 254–263 the chain is on the cytoplasmic side; that stretch reads ERNLQNVANY. The chain crosses the membrane as a helical span at residues 264–285; that stretch reads LVASLAVADLFVACLVMPLGAV. Topologically, residues 286 to 300 are extracellular; sequence YEISQGWILGPELCD. Cys299 and Cys378 are disulfide-bonded. A helical membrane pass occupies residues 301-322; it reads IWTSCDVLCCTASILHLVAIAV. Over 323 to 341 the chain is Cytoplasmic; that stretch reads DRYWAVTNIDYIHSRTSNR. Residues 342 to 364 form a helical membrane-spanning segment; it reads VFMMIFCVWTAAVIVSLAPQFGW. Residues 365–391 lie on the Extracellular side of the membrane; that stretch reads KDPDYLQRIEQQKCMVSQDVSYQVFAT. A helical transmembrane segment spans residues 392–413; the sequence is CCTFYVPLLVILALYWKIYQTA. Residues 414–752 lie on the Cytoplasmic side of the membrane; that stretch reads RKRIHRRRPR…AKRERKAAKT (339 aa). 5 disordered regions span residues 420–442, 460–516, 531–599, 617–640, and 674–743; these read RRPR…ATDT, KTGS…STSG, QQGK…SEDQ, LEQV…TSNA, and STLT…TLEA. Polar residues-rich tracts occupy residues 482-502 and 532-542; these read GNST…SNVD and QGKSTAKSSAA. Positions 551-564 are enriched in basic and acidic residues; that stretch reads RQEDDGQRPEHGEQ. A compositionally biased stretch (acidic residues) spans 565-575; the sequence is EDREELEDQDE. The segment covering 582–593 has biased composition (low complexity); sequence TTATSATTAAGT. Residues 674–694 are compositionally biased toward polar residues; sequence STLTSCNQSHPLCGTANESPS. Residues 702–723 are compositionally biased toward low complexity; it reads QPTTPQQQPHQQAHQQQQQQQQ. The helical transmembrane segment at 753–776 threads the bilayer; the sequence is LAIITGAFVVCWLPFFVMALTMPL. Residues 777 to 785 are Extracellular-facing; it reads CAACQISDS. The helical transmembrane segment at 786–808 threads the bilayer; the sequence is VASLFLWLGYFNSTLNPVIYTIF. The Cytoplasmic segment spans residues 809–834; it reads SPEFRQAFKRILFGGHRPVHYRSGKL.

It belongs to the G-protein coupled receptor 1 family.

The protein resides in the cell membrane. Its function is as follows. This is one of the several different receptors for 5-hydroxytryptamine (serotonin), a biogenic hormone that functions as a neurotransmitter, a hormone, and a mitogen. The activity of this receptor is mediated by G proteins which inhibit adenylate cyclase. In Drosophila melanogaster (Fruit fly), this protein is 5-hydroxytryptamine receptor 2A (5-HT1A).